The chain runs to 269 residues: GTP cyclohydrolase FolE2 (269 aa).

Belongs to the GTP cyclohydrolase IV family.

It catalyses the reaction GTP + H2O = 7,8-dihydroneopterin 3'-triphosphate + formate + H(+). It participates in cofactor biosynthesis; 7,8-dihydroneopterin triphosphate biosynthesis; 7,8-dihydroneopterin triphosphate from GTP: step 1/1. In terms of biological role, converts GTP to 7,8-dihydroneopterin triphosphate. This Burkholderia multivorans (strain ATCC 17616 / 249) protein is GTP cyclohydrolase FolE2.